The following is a 371-amino-acid chain: Chemerin-like receptor 1 (371 aa).

Topologically, residues 1–39 (MEYDAYNDSGIYDDEYSDGFGYFVDLEEASPWEAKVAPV) are extracellular. An N-linked (GlcNAc...) asparagine glycan is attached at Asn7. Residues 40–62 (FLVVIYSLVCFLGLLGNGLVIVI) traverse the membrane as a helical segment. Over 63 to 73 (ATFKMKKTVNT) the chain is Cytoplasmic. The helical transmembrane segment at 74–95 (VWFVNLAVADFLFNIFLPMHIT) threads the bilayer. Over 96 to 112 (YAAMDYHWVFGKAMCKI) the chain is Extracellular. Residues Cys110 and Cys187 are joined by a disulfide bond. A helical membrane pass occupies residues 113–133 (SNFLLSHNMYTSVFLLTVISF). Residues 134–152 (DRCISVLLPVWSQNHRSIR) lie on the Cytoplasmic side of the membrane. Residues 153 to 174 (LAYMTCSAVWVLAFFLSSPSLV) traverse the membrane as a helical segment. At 175-222 (FRDTANIHGKITCFNNFSLAAPESSPHPAHSQVVSTGYSRHVAVTVTR) the chain is on the extracellular side. Asn190 is a glycosylation site (N-linked (GlcNAc...) asparagine). The chain crosses the membrane as a helical span at residues 223-243 (FLCGFLIPVFIITACYLTIVF). The Cytoplasmic segment spans residues 244 to 259 (KLQRNRLAKNKKPFKI). The helical transmembrane segment at 260–280 (IITIIITFFLCWCPYHTLYLL) threads the bilayer. Residues 281-298 (ELHHTAVPSSVFSLGLPL) are Extracellular-facing. A helical transmembrane segment spans residues 299–318 (ATAVAIANSCMNPILYVFMG). The Cytoplasmic segment spans residues 319 to 371 (HDFRKFKVALFSRLANALSEDTGPSSYPSHRSFTKMSSLNEKASVNEKETSTL). At Ser337 the chain carries Phosphoserine. At Thr340 the chain carries Phosphothreonine. Residues Ser347, Ser350, and Ser356 each carry the phosphoserine modification. At Thr370 the chain carries Phosphothreonine.

This sequence belongs to the chemokine-like receptor (CMKLR) family. Expressed in the differentiated adipocytes (at protein level). Ubiquitous. Highly expressed in adipose tissue and immature plasmacytoid dendritic cells (DCs) and at lower levels in myeloid DCs, macrophages, and NK cells. Expressed on macrophages isolated from different tissues, including peritoneal cavities, pleural cavities and spleen.

It is found in the cell membrane. Its function is as follows. Receptor for the chemoattractant adipokine chemerin/RARRES2 and for the omega-3 fatty acid derived molecule resolvin E1. Interaction with RARRES2 initiates activation of G proteins G(i)/G(o) and beta-arrestin pathways inducing cellular responses via second messenger pathways such as intracellular calcium mobilization, phosphorylation of MAP kinases MAPK1/MAPK3 (ERK1/2), TYRO3, MAPK14/P38MAPK and PI3K leading to multifunctional effects, like, reduction of immune responses, enhancing of adipogenesis and angionesis. Resolvin E1 down-regulates cytokine production in macrophages by reducing the activation of MAPK1/3 (ERK1/2) and NF-kappa-B. Positively regulates adipogenesis and adipocyte metabolism. The chain is Chemerin-like receptor 1 (Cmklr1) from Mus musculus (Mouse).